The primary structure comprises 342 residues: Hypoxia responsive morphology factor C (342 aa).

Positions 46-68 (RMKIPRRKSEYSSHDRLKRARKI) match the Bipartite nuclear localization signal motif. An RNA recognition motif (RRM)-like domain region spans residues 151-181 (ADDAWAYNAADMDTAVKFFSEAIYKAIESSP).

This sequence belongs to the hrmA family.

It localises to the nucleus. Its function is as follows. Probably modulates the generation of the hypoxia-typic morphotype (called H-MORPH) with altered biofilm architecture that leads to increased host inflammation, rapid disease progression, and mortality in a murine model of invasive aspergillosis. The chain is Hypoxia responsive morphology factor C from Aspergillus fumigatus (strain CBS 144.89 / FGSC A1163 / CEA10) (Neosartorya fumigata).